A 341-amino-acid chain; its full sequence is Holliday junction branch migration complex subunit RuvB (341 aa).

Residues 1 to 21 form a disordered region; sequence MSQPDPMLRPEPLESDGEDRA. The interval 4-183 is large ATPase domain (RuvB-L); sequence PDPMLRPEPL…FGIPTRLQFY (180 aa). Residues Leu-22, Arg-23, Gly-64, Lys-67, Thr-68, Thr-69, 130-132, Arg-173, Tyr-183, and Arg-220 contribute to the ATP site; that span reads EDF. Thr-68 is a Mg(2+) binding site. Residues 184–254 form a small ATPAse domain (RuvB-S) region; the sequence is TIEELDLIVT…IADSALTRLG (71 aa). A head domain (RuvB-H) region spans residues 257–341; sequence HLGLDTADRR…PRTQESLFDE (85 aa). DNA is bound by residues Arg-293, Arg-312, and Arg-317.

The protein belongs to the RuvB family. Homohexamer. Forms an RuvA(8)-RuvB(12)-Holliday junction (HJ) complex. HJ DNA is sandwiched between 2 RuvA tetramers; dsDNA enters through RuvA and exits via RuvB. An RuvB hexamer assembles on each DNA strand where it exits the tetramer. Each RuvB hexamer is contacted by two RuvA subunits (via domain III) on 2 adjacent RuvB subunits; this complex drives branch migration. In the full resolvosome a probable DNA-RuvA(4)-RuvB(12)-RuvC(2) complex forms which resolves the HJ.

Its subcellular location is the cytoplasm. It carries out the reaction ATP + H2O = ADP + phosphate + H(+). Functionally, the RuvA-RuvB-RuvC complex processes Holliday junction (HJ) DNA during genetic recombination and DNA repair, while the RuvA-RuvB complex plays an important role in the rescue of blocked DNA replication forks via replication fork reversal (RFR). RuvA specifically binds to HJ cruciform DNA, conferring on it an open structure. The RuvB hexamer acts as an ATP-dependent pump, pulling dsDNA into and through the RuvAB complex. RuvB forms 2 homohexamers on either side of HJ DNA bound by 1 or 2 RuvA tetramers; 4 subunits per hexamer contact DNA at a time. Coordinated motions by a converter formed by DNA-disengaged RuvB subunits stimulates ATP hydrolysis and nucleotide exchange. Immobilization of the converter enables RuvB to convert the ATP-contained energy into a lever motion, pulling 2 nucleotides of DNA out of the RuvA tetramer per ATP hydrolyzed, thus driving DNA branch migration. The RuvB motors rotate together with the DNA substrate, which together with the progressing nucleotide cycle form the mechanistic basis for DNA recombination by continuous HJ branch migration. Branch migration allows RuvC to scan DNA until it finds its consensus sequence, where it cleaves and resolves cruciform DNA. In Paracoccus denitrificans (strain Pd 1222), this protein is Holliday junction branch migration complex subunit RuvB.